Here is a 102-residue protein sequence, read N- to C-terminus: Integration host factor subunit alpha (102 aa).

It belongs to the bacterial histone-like protein family. In terms of assembly, heterodimer of an alpha and a beta chain.

In terms of biological role, this protein is one of the two subunits of integration host factor, a specific DNA-binding protein that functions in genetic recombination as well as in transcriptional and translational control. In Chromohalobacter salexigens (strain ATCC BAA-138 / DSM 3043 / CIP 106854 / NCIMB 13768 / 1H11), this protein is Integration host factor subunit alpha.